Consider the following 918-residue polypeptide: Pre-pro-metalloprotease PrtV (918 aa).

Positions 1–23 (MKTIKKTLLAAAIASFFSSGLYA) are cleaved as a signal peptide. A propeptide spanning residues 24–105 (QTPIDLGVVN…QKGPHKARVF (82 aa)) is cleaved from the precursor. Position 330 (His330) interacts with Zn(2+). Residue Glu331 is part of the active site. His334 contributes to the Zn(2+) binding site. Residues Ile757, Asp782, Asp821, and Asp825 each coordinate Ca(2+). 2 PKD domains span residues 758–835 (APVA…TIKV) and 855–918 (VTMW…KVKL). A propeptide spanning residues 835-918 (VDTPNALPQA…VTTITIKVKL (84 aa)) is cleaved from the precursor.

The protein belongs to the peptidase M6 family. The cofactor is Zn(2+). PrtV is expressed as an inactive, multidomain, 102 kDa pre-pro-metalloprotease. To form a catalytically active protease, PrtV is first secreted, and then it undergoes N- and C-terminal cleavages during envelope translocation to yield a 81 kDa pro-metalloprotease. Outside the cell, the 81 kDa pro-metalloprotease undergoes an auto-cleavage. The two major products of autoproteolysis (37 kDa and 18 kDa) together form the so called 55 kDa active complex.

The protein localises to the secreted. With respect to regulation, calcium plays an important structural role, providing stability to this protein in the cytoplasm. Outside the cell, the decrease of the calcium concentration triggers the autoproteolysis. PrtV activity is increased by 25 mM of Sr(2+) or Mg(2+) and to some extent by Ba(2+); however, Ba(2+) inhibits PrtV at higher concentrations. Completely inhibited by EDTA and 1,10-phenanthroline. Metalloprotease that exhibits a cytotoxic effect leading to cell death. In host tissues, it could play a role in pathogenesis by modulating the stability of the extracellular matrix components such as fibronectin and fibrinogen. Also able to cleave plasminogen. The polypeptide is Pre-pro-metalloprotease PrtV (Vibrio cholerae serotype O1 (strain ATCC 39315 / El Tor Inaba N16961)).